Here is a 188-residue protein sequence, read N- to C-terminus: uncharacterized protein (188 aa).

3 helical membrane passes run 6–26 (MIVF…SLPL), 43–63 (FAGR…ILFA), and 110–130 (ALFL…MIAA).

It is found in the membrane. This is an uncharacterized protein from Schizosaccharomyces pombe (strain 972 / ATCC 24843) (Fission yeast).